A 710-amino-acid polypeptide reads, in one-letter code: WD repeat-containing protein CG11141 (710 aa).

2 WD repeats span residues 31-70 (FFPA…MQKL) and 133-172 (LHKC…HLSK). The disordered stretch occupies residues 283-307 (LNPKQRSEPSGTHHTSASTSSTRHS). The segment covering 292–307 (SGTHHTSASTSSTRHS) has biased composition (low complexity). T488 carries the post-translational modification Phosphothreonine. A Phosphoserine modification is found at S553. Disordered stretches follow at residues 612-635 (ASIQ…GEPV) and 685-710 (DPLA…FLDN). Polar residues-rich tracts occupy residues 613–624 (SIQTSSRENATN) and 694–704 (PATSDSNTSSE).

This sequence belongs to the WD repeat KIAA0329 family.

The sequence is that of WD repeat-containing protein CG11141 from Drosophila melanogaster (Fruit fly).